A 391-amino-acid polypeptide reads, in one-letter code: Aspartate carbamoyltransferase 3, chloroplastic (391 aa).

A chloroplast-targeting transit peptide spans 1-69 (MTASSSLFSC…SKCDKMIKTR (69 aa)). Carbamoyl phosphate contacts are provided by Arg137 and Thr138. The UMP site is built by Arg137 and Thr138. Lys167 serves as a coordination point for L-aspartate. Positions 188, 216, and 219 each coordinate carbamoyl phosphate. UMP is bound by residues Arg188 and His216. UMP contacts are provided by Arg249 and Arg311. Residues Arg249 and Arg311 each contribute to the L-aspartate site. Residues Leu351 and Pro352 each coordinate carbamoyl phosphate.

It belongs to the aspartate/ornithine carbamoyltransferase superfamily. ATCase family. Homotrimer.

The protein localises to the plastid. It localises to the chloroplast. The catalysed reaction is carbamoyl phosphate + L-aspartate = N-carbamoyl-L-aspartate + phosphate + H(+). It participates in pyrimidine metabolism; UMP biosynthesis via de novo pathway; (S)-dihydroorotate from bicarbonate: step 2/3. Its activity is regulated as follows. Feedback inhibited by UMP. Functionally, catalyzes the condensation of carbamoyl phosphate and aspartate to form carbamoyl aspartate and inorganic phosphate, the committed step in the de novo pyrimidine nucleotide biosynthesis pathway. The polypeptide is Aspartate carbamoyltransferase 3, chloroplastic (PYRB3) (Pisum sativum (Garden pea)).